Consider the following 368-residue polypeptide: Phospho-N-acetylmuramoyl-pentapeptide-transferase (368 aa).

10 helical membrane passes run Gly-34 to Leu-54, Thr-79 to Ala-99, Leu-102 to Tyr-122, Ala-140 to Gly-160, Leu-176 to Gly-196, Gly-207 to Ala-227, Leu-247 to Pro-267, Ile-271 to Ala-291, Ile-296 to Val-316, and Gln-345 to Leu-365.

It belongs to the glycosyltransferase 4 family. MraY subfamily. The cofactor is Mg(2+).

It localises to the cell inner membrane. The enzyme catalyses UDP-N-acetyl-alpha-D-muramoyl-L-alanyl-gamma-D-glutamyl-meso-2,6-diaminopimeloyl-D-alanyl-D-alanine + di-trans,octa-cis-undecaprenyl phosphate = di-trans,octa-cis-undecaprenyl diphospho-N-acetyl-alpha-D-muramoyl-L-alanyl-D-glutamyl-meso-2,6-diaminopimeloyl-D-alanyl-D-alanine + UMP. The protein operates within cell wall biogenesis; peptidoglycan biosynthesis. Catalyzes the initial step of the lipid cycle reactions in the biosynthesis of the cell wall peptidoglycan: transfers peptidoglycan precursor phospho-MurNAc-pentapeptide from UDP-MurNAc-pentapeptide onto the lipid carrier undecaprenyl phosphate, yielding undecaprenyl-pyrophosphoryl-MurNAc-pentapeptide, known as lipid I. The protein is Phospho-N-acetylmuramoyl-pentapeptide-transferase of Bradyrhizobium sp. (strain ORS 278).